The following is a 469-amino-acid chain: MVSHRAARRKRASATELYKTCKQSGTCPPDVINKVEGTTLADKLLQWTSLGIFLGGLGIGTGSGTGGRTGYIPLGGKPNTVVDVSPARPPVVIEPVGPTEPSIVQLVEDSSVITSGTPVPTFTGTSGFEITSSSTTTPAVLDITPSSGSVQVSSTSFTNPAFADPTIIEVPQTGEVSGNVFVSTPTSGTHGYEEIPMQVFATHGTGTEPISSTPIPGVSRVAGPRLYSRAHQQVRVSNFDFVTHPSSFVTFDNPAFEPVDTTLTYEPADIAPDPDFLDIVRLHRPALTSRRGTVRFSRVGKKATMFTRRGTQIGAQVHYYHDISGIAPADSIELQPLVAPEQSDPMDTLYDIYAPDTDNTTVLDTAFHNATFTSRSHISVPSLASTASTTYANTTIPIGTAWNTPVNTGPDVVLPATSPQLPLTPSTPIDTTYAITIYGTNYYLLPLLFFLLKKRKRLPYFFADGIVAL.

Residues 1 to 12 carry the Nuclear localization signal motif; the sequence is MVSHRAARRKRA. Cysteines 21 and 27 form a disulfide. The Nuclear localization signal signature appears at 450–458; sequence FLLKKRKRL.

The protein belongs to the papillomaviridae L2 protein family. In terms of assembly, interacts with major capsid protein L1. Interacts with E2; this interaction inhibits E2 transcriptional activity but not the DNA replication function E2. Interacts with host GADD45GIP1. Interacts with host HSPA8; this interaction is required for L2 nuclear translocation. Interacts with host importins KPNB2 and KPNB3. Forms a complex with importin alpha2-beta1 heterodimers via interaction with the importin alpha2 adapter. Interacts with host DYNLT1; this interaction is essential for virus intracellular transport during entry. Interacts (via C-terminus) with host retromer subunits VPS35 and VPS29. Post-translationally, highly phosphorylated.

The protein localises to the virion. It localises to the host nucleus. Its subcellular location is the host early endosome. The protein resides in the host Golgi apparatus. Its function is as follows. Minor protein of the capsid that localizes along the inner surface of the virion, within the central cavities beneath the L1 pentamers. Plays a role in capsid stabilization through interaction with the major capsid protein L1. Once the virion enters the host cell, L2 escorts the genomic DNA into the nucleus by promoting escape from the endosomal compartments and traffic through the host Golgi network. Mechanistically, the C-terminus of L2 possesses a cell-penetrating peptide that protudes from the host endosome, interacts with host cytoplasmic retromer cargo and thereby mediates the capsid delivery to the host trans-Golgi network. Plays a role through its interaction with host dynein in the intracellular microtubule-dependent transport of viral capsid toward the nucleus. Mediates the viral genome import into the nucleus through binding to host importins. Once within the nucleus, L2 localizes viral genomes to host PML bodies in order to activate early gene expression for establishment of infection. Later on, promotes late gene expression by interacting with the viral E2 protein and by inhibiting its transcriptional activation functions. During virion assembly, encapsidates the genome by direct interaction with the viral DNA. In Homo sapiens (Human), this protein is Minor capsid protein L2.